Consider the following 1356-residue polypeptide: Spike glycoprotein (1356 aa).

An N-terminal signal peptide occupies residues 1-18 (MKLFLILLVLPLASCFFT). S1 stretches follow at residues 16–717 (FFTC…FYYV) and 19–717 (CNSN…FYYV). Over 19-1296 (CNSNANLSML…NRFENYIKWP (1278 aa)) the chain is Virion surface. 3 N-linked (GlcNAc) asparagine; by host glycosylation sites follow: Asn35, Asn52, and Asn98. Cys106 and Cys126 are joined by a disulfide. An N-linked (GlcNAc) asparagine; by host glycan is attached at Asn155. Cys175 and Cys181 are joined by a disulfide. Asn187 and Asn193 each carry an N-linked (GlcNAc) asparagine; by host glycan. A disulfide bond links Cys207 and Cys210. 8 N-linked (GlcNAc) asparagine; by host glycosylation sites follow: Asn240, Asn276, Asn301, Asn330, Asn354, Asn358, Asn403, and Asn426. The cysteines at positions 259 and 284 are disulfide-linked. Cys328 and Cys351 are oxidised to a cystine. A disulfide bridge connects residues Cys438 and Cys447. An N-linked (GlcNAc...) asparagine; by host glycan is attached at Asn486. Residues Cys497 and Cys500 are joined by a disulfide bond. N-linked (GlcNAc) asparagine; by host glycosylation is present at Asn506. Asn512 carries an N-linked (GlcNAc...) asparagine; by host glycan. Cystine bridges form between Cys516-Cys567 and Cys550-Cys577. Positions 598-728 (VTWSEGNSIT…NGGNNCTTAV (131 aa)) are interaction with host ANPEP. 5 N-linked (GlcNAc) asparagine; by host glycosylation sites follow: Asn626, Asn645, Asn666, Asn699, and Asn723. Cys627 and Cys678 are joined by a disulfide. Positions 718–1356 (SNGGNNCTTA…YYEFEKVHVQ (639 aa)) are S2. Cys724 and Cys737 are disulfide-bonded. 3 N-linked (GlcNAc) asparagine; by host glycosylation sites follow: Asn749, Asn762, and Asn768. Cystine bridges form between Cys789-Cys811, Cys794-Cys800, and Cys896-Cys907. Positions 934 to 954 (IGGMVLGGLTSAAAIPFSLAL) are fusion peptide. Positions 948-1067 (IPFSLALQAR…QVDRLITGRL (120 aa)) are heptad repeat 1 (HR1). Residues 1015 to 1059 (QDVVNQQGSALNHLTSQLRHNFQAISNSIQAIYDRLDSIQADQQV) adopt a coiled-coil conformation. Residues Cys1098 and Cys1109 are joined by a disulfide bond. N-linked (GlcNAc) asparagine; by host glycans are attached at residues Asn1111, Asn1196, Asn1201, Asn1218, Asn1242, Asn1247, and Asn1277. The segment at 1212-1308 (PDYVDVNKTL…VWLIISVVFV (97 aa)) is heptad repeat 2 (HR2). The stretch at 1244 to 1286 (TYLNLSSELKQLEAKTASLFQTTVELQGLIDQINSTYVDLKLL) forms a coiled coil. A helical membrane pass occupies residues 1297–1316 (WWVWLIISVVFVVLLSLLVF). The Intravirion portion of the chain corresponds to 1317-1356 (CCLSTGCCGCCNCLTSSMRGCCDCGSTKLPYYEFEKVHVQ). The short motif at 1352–1356 (KVHVQ) is the KxHxx element.

It belongs to the alphacoronaviruses spike protein family. Homotrimer. During virus morphogenesis, found in a complex with M proteins. Interacts with host ACE2. In terms of processing, glycosylated by host with heterogeneous N-linked glycans protruding from the trimer surface. Highly glycosylated by host, occluding many regions across the surface of the protein.

It localises to the virion membrane. It is found in the host endoplasmic reticulum-Golgi intermediate compartment membrane. In terms of biological role, S1 region attaches the virion to the cell membrane by interacting with host ACE2, initiating the infection. Binding to the receptor probably induces conformational changes in the S glycoprotein unmasking the fusion peptide and activating membranes fusion. S2 region belongs to the class I viral fusion protein. Under the current model, the protein has at least 3 conformational states: pre-fusion native state, pre-hairpin intermediate state, and post-fusion hairpin state. During viral and target cell membrane fusion, the coiled coil regions (heptad repeats) regions assume a trimer-of-hairpins structure, positioning the fusion peptide in close proximity to the C-terminal region of the ectodomain. The formation of this structure appears to drive apposition and subsequent fusion of viral and target cell membranes. The protein is Spike glycoprotein of Human coronavirus NL63 (HCoV-NL63).